An 817-amino-acid polypeptide reads, in one-letter code: Disks large homolog 3 (817 aa).

An N-acetylmethionine mark is found at methionine 1 and histidine 2. The disordered stretch occupies residues 33 to 101 (WQVPDPYGPG…GKSTPKLNGS (69 aa)). The span at 40 to 53 (GPGGGNGASAGYGG) shows a compositional bias: gly residues. Residues 57–69 (QTLPSQAGATPTP) show a composition bias toward polar residues. 3 consecutive PDZ domains span residues 130–217 (EEIV…VRRR), 226–311 (EVNL…KVAK), and 379–465 (DFTR…VAQY). Position 139 is a phosphoserine (serine 139). One can recognise an SH3 domain in the interval 501-571 (KRSLYVRALF…PSKKRVEKKE (71 aa)). Positions 627 to 802 (ARPVIILGPM…IYNKIKQIIE (176 aa)) constitute a Guanylate kinase-like domain. Tyrosine 673 is subject to Phosphotyrosine.

Belongs to the MAGUK family. Interacts through its PDZ domains with NETO1, GRIN2B and SYNGAP1. Interacts through its guanylate kinase-like domain with DLGAP1, DLGAP2, DLGAP3 and DLGAP4. Interacts with FLTP/C1orf192. Interacts through its PDZ domains with APC. Interacts through its first two PDZ domains with ERBB4. Interacts through its third PDZ domain with NLGN1, and probably with NLGN2 and NLGN3. Interacts with FRMPD4 (via C-terminus). Interacts with LRFN1, LRFN2 and LRFN4. Interacts with DGKI (via PDZ-binding motif).

In terms of biological role, required for learning most likely through its role in synaptic plasticity following NMDA receptor signaling. The protein is Disks large homolog 3 (DLG3) of Homo sapiens (Human).